Here is a 212-residue protein sequence, read N- to C-terminus: Adenylate kinase (212 aa).

ATP is bound at residue 10–15 (GAGKGT). Residues 30-59 (AIGDIFRAIIKTSSKDAEVINSYVEQGKLI) form an NMP region. Residues Arg-36, 57 to 59 (KLI), 85 to 88 (GYPR), and Gln-92 each bind AMP. Positions 122 to 160 (GRYSCKSCGKIYNDYFLKPRIDKICDVCKSSVFEYRKDD) are LID. Residue Arg-123 coordinates ATP. Residues Cys-126 and Cys-129 each coordinate Zn(2+). Residue 132–133 (IY) coordinates ATP. Positions 146 and 149 each coordinate Zn(2+). Residues Arg-157 and Arg-168 each coordinate AMP. Residue Lys-196 participates in ATP binding.

The protein belongs to the adenylate kinase family. As to quaternary structure, monomer.

The protein localises to the cytoplasm. The catalysed reaction is AMP + ATP = 2 ADP. The protein operates within purine metabolism; AMP biosynthesis via salvage pathway; AMP from ADP: step 1/1. In terms of biological role, catalyzes the reversible transfer of the terminal phosphate group between ATP and AMP. Plays an important role in cellular energy homeostasis and in adenine nucleotide metabolism. This chain is Adenylate kinase, found in Rickettsia bellii (strain RML369-C).